The following is a 273-amino-acid chain: Putative inactive beta-glucuronidase protein GUSBP11 (273 aa).

Residues methionine 1–glycine 20 are disordered.

This sequence belongs to the glycosyl hydrolase 2 family.

In Homo sapiens (Human), this protein is Putative inactive beta-glucuronidase protein GUSBP11 (GUSBP11).